We begin with the raw amino-acid sequence, 758 residues long: MAVSARPARAPRGPDKVKKDKAAQTSGPRQGSQMGKLLGFEWTDVSSWERLVTLLNRPTDPASLAVFRFLFGLMMVLDIPQERGLSSLDRRYLDGLEVCRFPLLDALQPLPLDWMYLVYTIMFLGALGMMLGLCYRISCVLFLLPYWYVFLLDKTSWNNHSYLYGLLAFQLTFVDAHHYWSVDGLLRARKRNAHVPLWNYAVLRGQIFIVYFIAGIKKLDADWVEGYSMEYLSRHWLFSPFKLVLSEEMTSLLVVHWCGLLLDLSAGFLLFFDASRPIGFVFVSYFHCMNSQLFSIGMFPYVMLASSPLFCSPEWPRKLVAHCPKKLQELLPLRTAPQPSTSCMYKRSRARGSQKPGLRHQLSTAFTLLYLLEQLFLPYSHFLTQGYNNWTNGLYGYSWDMMVHSRSHQHVKITYRDGRTGELGYLNPGVFTQSRRWKDHADMLKQYATCLSRLLPKYNVTEPQIYFDIWVSINDRFQQRIFDPRVDIVQAAWSPFQRTPWLQPLLMDLSPWRTKLQEIKSSLDNHTEVVFIADFPGLHLENFVSEDLGNTSIQLLQGEVTVELVAEQKNQTLQEGEKMQLPAGEYHKVYTVSSSPSCYMYIYVNTTEVALEQDLAYLQELKEKVENGSETGPLPPELQPLLEGEVKGGPEPTPLVQTFLRRQQRLQEIERRRNAPFYERFVRFLLRKLFIFRRSFLMTCISLRNLALGRPSLEQLAQEVTYANLRPFEPAGEPSPVNTDSSNPNPPEPDSHPVHSEF.

Residues 1-34 are disordered; that stretch reads MAVSARPARAPRGPDKVKKDKAAQTSGPRQGSQM. Ala2 carries the post-translational modification N-acetylalanine. Residues 2–60 are Cytoplasmic-facing; that stretch reads AVSARPARAPRGPDKVKKDKAAQTSGPRQGSQMGKLLGFEWTDVSSWERLVTLLNRPTD. Residues 12-22 show a composition bias toward basic and acidic residues; it reads RGPDKVKKDKA. Over residues 23 to 33 the composition is skewed to polar residues; that stretch reads AQTSGPRQGSQ. Residues 61 to 81 form a helical membrane-spanning segment; that stretch reads PASLAVFRFLFGLMMVLDIPQ. Residues 82–113 lie on the Lumenal side of the membrane; sequence ERGLSSLDRRYLDGLEVCRFPLLDALQPLPLD. An intrachain disulfide couples Cys99 to Cys450. Residues 114–134 traverse the membrane as a helical segment; that stretch reads WMYLVYTIMFLGALGMMLGLC. The Cytoplasmic segment spans residues 135–136; sequence YR. Residues 137–157 traverse the membrane as a helical segment; the sequence is ISCVLFLLPYWYVFLLDKTSW. Over 158-292 the chain is Lumenal; that stretch reads NNHSYLYGLL…VSYFHCMNSQ (135 aa). Residues 293-313 traverse the membrane as a helical segment; it reads LFSIGMFPYVMLASSPLFCSP. The Cytoplasmic segment spans residues 314 to 361; the sequence is EWPRKLVAHCPKKLQELLPLRTAPQPSTSCMYKRSRARGSQKPGLRHQ. A helical membrane pass occupies residues 362-382; the sequence is LSTAFTLLYLLEQLFLPYSHF. The Lumenal portion of the chain corresponds to 383 to 758; it reads LTQGYNNWTN…PDSHPVHSEF (376 aa). The interval 726-758 is disordered; that stretch reads RPFEPAGEPSPVNTDSSNPNPPEPDSHPVHSEF. Basic and acidic residues predominate over residues 749-758; the sequence is PDSHPVHSEF.

This sequence belongs to the vitamin K-dependent gamma-carboxylase family. Monomer. May interact with CALU.

It is found in the endoplasmic reticulum membrane. The enzyme catalyses 4-carboxy-L-glutamyl-[protein] + 2,3-epoxyphylloquinone + H2O + H(+) = phylloquinol + L-glutamyl-[protein] + CO2 + O2. In terms of biological role, mediates the vitamin K-dependent carboxylation of glutamate residues to calcium-binding gamma-carboxyglutamate (Gla) residues with the concomitant conversion of the reduced hydroquinone form of vitamin K to vitamin K epoxide. Catalyzes gamma-carboxylation of various proteins, such as blood coagulation factors (F2, F7, F9 and F10), osteocalcin (BGLAP) or matrix Gla protein (MGP). This Ovis aries (Sheep) protein is Vitamin K-dependent gamma-carboxylase (GGCX).